The sequence spans 124 residues: Large ribosomal subunit protein uL29 (124 aa).

The protein belongs to the universal ribosomal protein uL29 family.

This is Large ribosomal subunit protein uL29 (RPL35) from Tetrahymena thermophila (strain SB210).